Here is a 402-residue protein sequence, read N- to C-terminus: MQKLTILGATGSIGASTLKVIEQNPDKFSVVALAADSNVEKMQQLCQRWQPEYAVMANKEAALRLKMALAVLAPNTQVLGGQEALCYVATLEQVDSVMAAIVGAAGLVPTMAAVKAGKRILLANKEALVMSGQLFIDEVEKSGAQLLPVDSEHNAIFQCLPQTVQGNLGRCDLASQGVSHILLTGSGGPFRYTDVAELEAVTPEQAIAHPNWSMGPKISVDSATMMNKGLEYIEAKWLFNASRDQLKVIIHPQSVIHSMVQYLDGSVLAQMGEPDMATPIALTLSYPERVKAGVKPLDFTQVGELTFLQPDFERYPCLALAIEACYLGQHATTTLNAANEVAVAAFLARQIKFTDIARVNDSVLNQVCKQSLASGLDSLESLLELDRMARTLADEVVRERAQ.

NADPH-binding residues include threonine 10, glycine 11, serine 12, isoleucine 13, asparagine 38, and asparagine 124. Residue lysine 125 participates in 1-deoxy-D-xylulose 5-phosphate binding. Position 126 (glutamate 126) interacts with NADPH. Aspartate 150 provides a ligand contact to Mn(2+). Residues serine 151, glutamate 152, serine 186, and histidine 209 each coordinate 1-deoxy-D-xylulose 5-phosphate. Glutamate 152 is a binding site for Mn(2+). An NADPH-binding site is contributed by glycine 215. 4 residues coordinate 1-deoxy-D-xylulose 5-phosphate: serine 222, asparagine 227, lysine 228, and glutamate 231. Glutamate 231 serves as a coordination point for Mn(2+).

The protein belongs to the DXR family. Mg(2+) serves as cofactor. Mn(2+) is required as a cofactor.

The catalysed reaction is 2-C-methyl-D-erythritol 4-phosphate + NADP(+) = 1-deoxy-D-xylulose 5-phosphate + NADPH + H(+). The protein operates within isoprenoid biosynthesis; isopentenyl diphosphate biosynthesis via DXP pathway; isopentenyl diphosphate from 1-deoxy-D-xylulose 5-phosphate: step 1/6. Its function is as follows. Catalyzes the NADPH-dependent rearrangement and reduction of 1-deoxy-D-xylulose-5-phosphate (DXP) to 2-C-methyl-D-erythritol 4-phosphate (MEP). The protein is 1-deoxy-D-xylulose 5-phosphate reductoisomerase of Vibrio vulnificus (strain CMCP6).